A 245-amino-acid chain; its full sequence is Lactate utilization protein A (245 aa).

This sequence belongs to the LutA/YkgE family.

Is involved in L-lactate degradation and allows cells to grow with lactate as the sole carbon source. This chain is Lactate utilization protein A, found in Macrococcus caseolyticus (strain JCSC5402) (Macrococcoides caseolyticum).